Reading from the N-terminus, the 464-residue chain is Clusterin-like protein 1 (464 aa).

Residues 1–20 (MQPPLFVISVYLLWLKYCDS) form the signal peptide. Positions 56–109 (IKQMKIMMERREEEHAKLMKALKKCKEEKQEAQKLMNEVQERLEEEEKLCQASS) form a coiled coil. 5 disulfide bridges follow: cysteine 105–cysteine 331, cysteine 116–cysteine 323, cysteine 119–cysteine 320, cysteine 124–cysteine 313, and cysteine 131–cysteine 303. Asparagine 195, asparagine 255, asparagine 309, asparagine 349, asparagine 398, and asparagine 429 each carry an N-linked (GlcNAc...) asparagine glycan.

The protein belongs to the clusterin family.

It is found in the secreted. In Rattus norvegicus (Rat), this protein is Clusterin-like protein 1.